A 721-amino-acid polypeptide reads, in one-letter code: Procollagen-lysine,2-oxoglutarate 5-dioxygenase (721 aa).

An N-terminal signal peptide occupies residues 1–21 (MRIQQSALLLLLLAVTSQGDA). N-linked (GlcNAc...) asparagine glycosylation is found at Asn504, Asn530, and Asn536. The region spanning 627–721 (NPPRALMNFM…RYIMISFIDP (95 aa)) is the Fe2OG dioxygenase domain. Fe cation-binding residues include His650 and Asp652. N-linked (GlcNAc...) asparagine glycosylation occurs at Asn680. His702 contacts Fe cation. A glycan (N-linked (GlcNAc...) asparagine) is linked at Asn709. Arg712 lines the 2-oxoglutarate pocket.

L-ascorbate serves as cofactor. It depends on Fe(2+) as a cofactor.

The protein localises to the endoplasmic reticulum. It localises to the secreted. It is found in the extracellular space. It carries out the reaction L-lysyl-[collagen] + 2-oxoglutarate + O2 = (5R)-5-hydroxy-L-lysyl-[collagen] + succinate + CO2. Its function is as follows. Forms hydroxylysine residues in collagen type IV. Required for the secretion of collagen type IV (vkg) from haemocytes, fat body and follicle cells. The chain is Procollagen-lysine,2-oxoglutarate 5-dioxygenase from Drosophila melanogaster (Fruit fly).